Here is an 87-residue protein sequence, read N- to C-terminus: MSIMDHSPTTGVVTVIVILIAIAALGALILGCWCYLRLQRISQSEDEESIVGDGETKEPFLLVQYSAKGPCVERKAKLTPNGPEVHS.

Residues 1–10 (MSIMDHSPTT) lie on the Mitochondrial intermembrane side of the membrane. A helical membrane pass occupies residues 11-31 (GVVTVIVILIAIAALGALILG). Residues 32 to 87 (CWCYLRLQRISQSEDEESIVGDGETKEPFLLVQYSAKGPCVERKAKLTPNGPEVHS) lie on the Cytoplasmic side of the membrane. At S49 the chain carries Phosphoserine.

This sequence belongs to the stannin family. Monomer.

Its subcellular location is the mitochondrion outer membrane. Plays a role in the toxic effects of organotins. Plays a role in endosomal maturation. This chain is Stannin (SNN), found in Bos taurus (Bovine).